A 363-amino-acid chain; its full sequence is Aminomethyltransferase (363 aa).

This sequence belongs to the GcvT family. The glycine cleavage system is composed of four proteins: P, T, L and H.

The catalysed reaction is N(6)-[(R)-S(8)-aminomethyldihydrolipoyl]-L-lysyl-[protein] + (6S)-5,6,7,8-tetrahydrofolate = N(6)-[(R)-dihydrolipoyl]-L-lysyl-[protein] + (6R)-5,10-methylene-5,6,7,8-tetrahydrofolate + NH4(+). Functionally, the glycine cleavage system catalyzes the degradation of glycine. This Nitrosomonas europaea (strain ATCC 19718 / CIP 103999 / KCTC 2705 / NBRC 14298) protein is Aminomethyltransferase.